Here is a 213-residue protein sequence, read N- to C-terminus: Macrodontain-1 (213 aa).

Cystine bridges form between cysteine 23-cysteine 63, cysteine 57-cysteine 96, and cysteine 153-cysteine 201. The active site involves cysteine 26. Catalysis depends on residues histidine 159 and asparagine 176.

Monomer. In terms of tissue distribution, fruits.

Its activity is regulated as follows. Inhibited by the general cysteine protease inhibitor E64 (L-trans-epoxysuccinyl-leucylamide-(4-guanido)-butane). Cysteine protease that catalyzes the preferential cleavage: Ala-|-Xaa &gt; Gln-|-Xaa &gt; Tyr-Xaa &gt;&gt; Leu-|-Xaa &gt; Gly-|-Xaa. Hydrolyzes the synthetic peptide substrate Bz-Phe-Val-Arg-pNA. In Ananas macrodontes (False pineapple), this protein is Macrodontain-1.